We begin with the raw amino-acid sequence, 269 residues long: Putative biopolymer transport protein ExbD (269 aa).

The Cytoplasmic segment spans residues 1–40 (MASSPKAPKSHRKFQSIYHPTRPLSLWQDNQHDQGEVRIE). A helical transmembrane segment spans residues 41-61 (IIPLIDVVFCILTFFILGAVG). The Periplasmic segment spans residues 62–269 (LSRQQAISLD…GNTVPSAPQQ (208 aa)). Positions 190–269 (NGANPGMSNF…GNTVPSAPQQ (80 aa)) are disordered. The span at 193 to 204 (NPGMSNFNNSNP) shows a compositional bias: low complexity.

This sequence belongs to the ExbD/TolR family.

The protein localises to the cell inner membrane. The chain is Putative biopolymer transport protein ExbD from Synechocystis sp. (strain ATCC 27184 / PCC 6803 / Kazusa).